Here is a 218-residue protein sequence, read N- to C-terminus: Probable WRKY transcription factor 12 (218 aa).

Residues 49–63 (SSLSSPSFPIHNSSS) are compositionally biased toward low complexity. Disordered regions lie at residues 49 to 120 (SSLS…DMKN) and 199 to 218 (HNHI…LSSF). Residues 64 to 77 (TTTTHAPLGFSNNL) show a composition bias toward polar residues. A compositionally biased stretch (low complexity) spans 105–116 (SNSWWRSNSGSG). Positions 139–204 (SDVDVLDDGY…YEGRHNHIPS (66 aa)) form a DNA-binding region, WRKY.

It belongs to the WRKY group II-c family.

It is found in the nucleus. Transcription factor. Interacts specifically with the W box (5'-(T)TGAC[CT]-3'), a frequently occurring elicitor-responsive cis-acting element. In Arabidopsis thaliana (Mouse-ear cress), this protein is Probable WRKY transcription factor 12 (WRKY12).